A 443-amino-acid chain; its full sequence is Glutamyl-tRNA reductase (443 aa).

Substrate contacts are provided by residues 49–52 (TCNR), S109, 114–116 (ETQ), and Q120. The Nucleophile role is filled by C50. NADP(+) is bound at residue 189-194 (GAGEMS).

It belongs to the glutamyl-tRNA reductase family. As to quaternary structure, homodimer.

It carries out the reaction (S)-4-amino-5-oxopentanoate + tRNA(Glu) + NADP(+) = L-glutamyl-tRNA(Glu) + NADPH + H(+). It participates in porphyrin-containing compound metabolism; protoporphyrin-IX biosynthesis; 5-aminolevulinate from L-glutamyl-tRNA(Glu): step 1/2. In terms of biological role, catalyzes the NADPH-dependent reduction of glutamyl-tRNA(Glu) to glutamate 1-semialdehyde (GSA). This chain is Glutamyl-tRNA reductase, found in Desulfitobacterium hafniense (strain DSM 10664 / DCB-2).